The following is a 286-amino-acid chain: Glycine--tRNA ligase alpha subunit (286 aa).

The protein belongs to the class-II aminoacyl-tRNA synthetase family. Tetramer of two alpha and two beta subunits.

The protein localises to the cytoplasm. It catalyses the reaction tRNA(Gly) + glycine + ATP = glycyl-tRNA(Gly) + AMP + diphosphate. The protein is Glycine--tRNA ligase alpha subunit of Campylobacter concisus (strain 13826).